A 521-amino-acid polypeptide reads, in one-letter code: Cytochrome P450 1A1 (521 aa).

A substrate-binding site is contributed by Phe229. Position 463 (Cys463) interacts with heme.

Belongs to the cytochrome P450 family. The cofactor is heme.

Its subcellular location is the endoplasmic reticulum membrane. The protein resides in the microsome membrane. The catalysed reaction is an organic molecule + reduced [NADPH--hemoprotein reductase] + O2 = an alcohol + oxidized [NADPH--hemoprotein reductase] + H2O + H(+). Cytochromes P450 are a group of heme-thiolate monooxygenases. They oxidize a variety of structurally unrelated compounds, including steroids, fatty acids, and xenobiotics. This chain is Cytochrome P450 1A1 (cyp1a1), found in Chelon auratus (Golden grey mullet).